A 353-amino-acid chain; its full sequence is Sulfate/thiosulfate import ATP-binding protein CysA (353 aa).

The 235-residue stretch at 3-237 folds into the ABC transporter domain; sequence IQVKNIEKHF…PATPFVFDFL (235 aa). ATP is bound at residue 35-42; that stretch reads GPSGCGKT.

Belongs to the ABC transporter superfamily. Sulfate/tungstate importer (TC 3.A.1.6) family. In terms of assembly, the complex is composed of two ATP-binding proteins (CysA), two transmembrane proteins (CysT and CysW) and a solute-binding protein (CysP).

The protein resides in the cell inner membrane. It carries out the reaction sulfate(out) + ATP + H2O = sulfate(in) + ADP + phosphate + H(+). The catalysed reaction is thiosulfate(out) + ATP + H2O = thiosulfate(in) + ADP + phosphate + H(+). Part of the ABC transporter complex CysAWTP involved in sulfate/thiosulfate import. Responsible for energy coupling to the transport system. The polypeptide is Sulfate/thiosulfate import ATP-binding protein CysA (Acinetobacter baylyi (strain ATCC 33305 / BD413 / ADP1)).